The chain runs to 483 residues: Leukocyte immunoglobulin-like receptor subfamily A member 2 (483 aa).

A signal peptide spans 1–23; sequence MTPILTVLICLGLSLGPRTHVQA. At 24 to 449 the chain is on the extracellular side; the sequence is GHLPKPTLWA…QHPQDYTVEN (426 aa). 4 Ig-like C2-type domains span residues 27-113, 117-222, 224-313, and 324-413; these read PKPT…DPLE, TGAY…GVSK, PSLS…DPLD, and PSLS…SDPL. Cys49 and Cys97 are disulfide-bonded. 3 N-linked (GlcNAc...) asparagine glycosylation sites follow: Asn64, Asn103, and Asn138. Disulfide bonds link Cys143/Cys195 and Cys244/Cys295. N-linked (GlcNAc...) asparagine glycans are attached at residues Asn279, Asn300, and Asn339. Residues Cys344 and Cys395 are joined by a disulfide bond. Tyr404 is modified (3'-nitrotyrosine). N-linked (GlcNAc...) asparagine glycosylation occurs at Asn429. Residues 450–470 form a helical membrane-spanning segment; the sequence is LIRMGVAGLVLVVLGILLFEA. At 471-483 the chain is on the cytoplasmic side; it reads QHSQRSLQDAAGR.

Homodimer. In terms of tissue distribution, detected on the surface of all peripheral blood monocytes, neutrophils, basophils and eosinophils (at protein level). Expression levels are very low or not detectable on monocytes, T-cells, B-cells, dendritic cells and natural killer (NK) cells.

It localises to the cell membrane. Its subcellular location is the secreted. In terms of biological role, part of the innate immune responses against microbial infection. Specifically recognizes a set of N-terminally truncated immunoglobulins that are produced via cleavage by proteases from a range of pathogenic bacteria and fungi, including L.pneumophila, M.hyorhinis, S.pneumoniae, S.aureus and C.albicans. Recognizes epitopes that are in part in the variable region of the immunoglobulin light chains, but requires also the constant region for signaling. Binds to a subset of cleaved IgM, IgG3 and IgG4 molecules, but does not bind cleaved IgA1. Binding of N-terminally truncated immunoglobulins mediates activation of neutrophils. In monocytes, activation leads to the release of CSF2, CF3, IL6, CXCL8 and CCL3 and down-regulates responses to bacterial lipopolysaccharide (LPS), possibly via down-regulation of TLR4 expression and reduced signaling via TLR4. In eosinophils, activation by ligand binding leads to the release of RNASE2, IL4 and leukotriene C4. Does not bind class I MHC antigens. The polypeptide is Leukocyte immunoglobulin-like receptor subfamily A member 2 (LILRA2) (Homo sapiens (Human)).